The chain runs to 266 residues: MIAMNTPDFQRMKKDNKKISMVTCYDYWSACIISQSNVDCILVGDSLAMVMYGHSTTLPATVEIMAQHIQAVSRGAPNKFIIGDMPFCSYRKDLTTSMNAVERLMQAGAQAIKLEGADAHNLKFIHHVVKSGIPVIGHLGLTPQSIYTLGGFKVQGKEPSAAKKLMADAKALAETGCFAVVLECVPSELAELITHSISIPTIGIGAGPATSGQVLVLQDLLGTNNQFQPKYLKKFLNGFELIKKALDDFDQEVKTSTYPHLETHCY.

Mg(2+)-binding residues include aspartate 45 and aspartate 84. 3-methyl-2-oxobutanoate-binding positions include 45 to 46, aspartate 84, and lysine 113; that span reads DS. Glutamate 115 contributes to the Mg(2+) binding site. The active-site Proton acceptor is glutamate 183.

The protein belongs to the PanB family. Homodecamer; pentamer of dimers. It depends on Mg(2+) as a cofactor.

The protein localises to the cytoplasm. The catalysed reaction is 3-methyl-2-oxobutanoate + (6R)-5,10-methylene-5,6,7,8-tetrahydrofolate + H2O = 2-dehydropantoate + (6S)-5,6,7,8-tetrahydrofolate. It functions in the pathway cofactor biosynthesis; (R)-pantothenate biosynthesis; (R)-pantoate from 3-methyl-2-oxobutanoate: step 1/2. In terms of biological role, catalyzes the reversible reaction in which hydroxymethyl group from 5,10-methylenetetrahydrofolate is transferred onto alpha-ketoisovalerate to form ketopantoate. This is 3-methyl-2-oxobutanoate hydroxymethyltransferase from Coxiella burnetii (strain Dugway 5J108-111).